Consider the following 255-residue polypeptide: Type III pantothenate kinase (255 aa).

Asp-6–Val-13 contacts ATP. Residues Tyr-100 and Gly-107–Arg-110 each bind substrate. The active-site Proton acceptor is the Asp-109. K(+) is bound at residue Asp-129. Thr-132 is a binding site for ATP. Thr-184 contacts substrate.

The protein belongs to the type III pantothenate kinase family. As to quaternary structure, homodimer. It depends on NH4(+) as a cofactor. K(+) is required as a cofactor.

Its subcellular location is the cytoplasm. The catalysed reaction is (R)-pantothenate + ATP = (R)-4'-phosphopantothenate + ADP + H(+). It participates in cofactor biosynthesis; coenzyme A biosynthesis; CoA from (R)-pantothenate: step 1/5. Its function is as follows. Catalyzes the phosphorylation of pantothenate (Pan), the first step in CoA biosynthesis. The protein is Type III pantothenate kinase of Ruminiclostridium cellulolyticum (strain ATCC 35319 / DSM 5812 / JCM 6584 / H10) (Clostridium cellulolyticum).